A 416-amino-acid chain; its full sequence is Probable glucan 1,3-beta-glucosidase A (416 aa).

The first 22 residues, 1-22, serve as a signal peptide directing secretion; sequence MIFKFSQKALVALYLVVGLAEA. The active-site Proton donor is E211. Cystine bridges form between C291–C415 and C316–C342. The Nucleophile role is filled by E308. An N-linked (GlcNAc...) asparagine glycan is attached at N344.

This sequence belongs to the glycosyl hydrolase 5 (cellulase A) family. Monomer. Requires Mn(2+) as cofactor.

Its subcellular location is the secreted. It carries out the reaction Successive hydrolysis of beta-D-glucose units from the non-reducing ends of (1-&gt;3)-beta-D-glucans, releasing alpha-glucose.. Functionally, beta-glucanases participate in the metabolism of beta-glucan, the main structural component of the cell wall. It could also function biosynthetically as a transglycosylase. The chain is Probable glucan 1,3-beta-glucosidase A (exgA) from Aspergillus fumigatus (strain CBS 144.89 / FGSC A1163 / CEA10) (Neosartorya fumigata).